The sequence spans 185 residues: Protein OPG161 (185 aa).

Residues 1 to 33 lie on the Intravirion side of the membrane; the sequence is MMTPENDEEQTSVFSATVYGDKIQGKNKRKRVI. Residues 34–56 form a helical membrane-spanning segment; the sequence is GLCIRISMVISLLSMITMSAFLI. Residues 57–185 lie on the Virion surface side of the membrane; that stretch reads VRLNQCMSAN…RKYFCVKTMN (129 aa). Residues 98–185 are C-type lectin-like domain; sequence ESCNGLYYQG…RKYFCVKTMN (88 aa). 2 N-linked (GlcNAc...) asparagine; by host glycosylation sites follow: Asn-125 and Asn-135.

This sequence belongs to the orthopoxvirus OPG161 family. As to quaternary structure, homodimer, disulfide-linked. Interacts with protein OPG190. Interacts (via C-terminus) with protein OPG164. Interacts with OPG162.

It localises to the virion membrane. The protein resides in the host membrane. Its function is as follows. Forms a complex with OPG162 and OPG190 to coordinate the incorporation of OPG164 into wrapped enveloped virion (EV) membranes and, subsequently, the production of actin tails. Therefore plays an essential role in efficient cell-to-cell spread of viral particles. The chain is Protein OPG161 (OPG161) from Homo sapiens (Human).